Reading from the N-terminus, the 173-residue chain is Superoxide dismutase [Cu-Zn] (173 aa).

Residues 1–22 (MNKAKTLLFTALAFGLSHQALA) form the signal peptide. Cu cation-binding residues include His67, His69, and His92. Cys74 and Cys169 are oxidised to a cystine. Zn(2+) is bound by residues His92, His101, His110, and Asp113. His147 contacts Cu cation.

It belongs to the Cu-Zn superoxide dismutase family. In terms of assembly, homodimer. It depends on Cu cation as a cofactor. Requires Zn(2+) as cofactor.

It localises to the periplasm. It carries out the reaction 2 superoxide + 2 H(+) = H2O2 + O2. In terms of biological role, destroys radicals which are normally produced within the cells and which are toxic to biological systems. In Photobacterium leiognathi, this protein is Superoxide dismutase [Cu-Zn] (sodC).